We begin with the raw amino-acid sequence, 502 residues long: N-sulphoglucosamine sulphohydrolase (502 aa).

The first 20 residues, 1–20, serve as a signal peptide directing secretion; sequence MSCPVPACCALLLVLGLCRA. Residues D31 and D32 each coordinate Ca(2+). Residue N41 is glycosylated (N-linked (GlcNAc...) asparagine). Position 70 (C70) interacts with Ca(2+). C70 acts as the Nucleophile in catalysis. 3-oxoalanine (Cys) is present on C70. N-linked (GlcNAc...) asparagine glycans are attached at residues N142 and N151. C183 and C194 are oxidised to a cystine. N264 carries an N-linked (GlcNAc...) asparagine glycan. Residues D273 and N274 each contribute to the Ca(2+) site. N-linked (GlcNAc...) asparagine glycosylation is present at N413. The cysteines at positions 481 and 495 are disulfide-linked.

Belongs to the sulfatase family. It depends on Ca(2+) as a cofactor. The conversion to 3-oxoalanine (also known as C-formylglycine, FGly), of a serine or cysteine residue in prokaryotes and of a cysteine residue in eukaryotes, is critical for catalytic activity.

Its subcellular location is the lysosome. The enzyme catalyses N-sulfo-D-glucosamine + H2O = D-glucosamine + sulfate. Functionally, catalyzes a step in lysosomal heparan sulfate degradation. The polypeptide is N-sulphoglucosamine sulphohydrolase (SGSH) (Homo sapiens (Human)).